The chain runs to 672 residues: DNA ligase (672 aa).

NAD(+)-binding positions include 30-34, 79-80, and Glu110; these read DAVYD and SL. The active-site N6-AMP-lysine intermediate is the Lys112. Positions 133, 170, 287, and 311 each coordinate NAD(+). 4 residues coordinate Zn(2+): Cys405, Cys408, Cys423, and Cys429. One can recognise a BRCT domain in the interval 590-672; the sequence is ADELPLSGKT…IALLTEHGAI (83 aa).

It belongs to the NAD-dependent DNA ligase family. LigA subfamily. Mg(2+) serves as cofactor. Requires Mn(2+) as cofactor.

It carries out the reaction NAD(+) + (deoxyribonucleotide)n-3'-hydroxyl + 5'-phospho-(deoxyribonucleotide)m = (deoxyribonucleotide)n+m + AMP + beta-nicotinamide D-nucleotide.. Its function is as follows. DNA ligase that catalyzes the formation of phosphodiester linkages between 5'-phosphoryl and 3'-hydroxyl groups in double-stranded DNA using NAD as a coenzyme and as the energy source for the reaction. It is essential for DNA replication and repair of damaged DNA. This is DNA ligase from Marinomonas sp. (strain MWYL1).